A 312-amino-acid chain; its full sequence is tRNA dimethylallyltransferase (312 aa).

13–20 (GPTAAGKT) is an ATP binding site. 15-20 (TAAGKT) contributes to the substrate binding site. 3 interaction with substrate tRNA regions span residues 38–41 (DSAM), 162–166 (QRLLR), and 244–249 (RCVGYR).

Belongs to the IPP transferase family. As to quaternary structure, monomer. The cofactor is Mg(2+).

It carries out the reaction adenosine(37) in tRNA + dimethylallyl diphosphate = N(6)-dimethylallyladenosine(37) in tRNA + diphosphate. Catalyzes the transfer of a dimethylallyl group onto the adenine at position 37 in tRNAs that read codons beginning with uridine, leading to the formation of N6-(dimethylallyl)adenosine (i(6)A). The sequence is that of tRNA dimethylallyltransferase from Chromohalobacter salexigens (strain ATCC BAA-138 / DSM 3043 / CIP 106854 / NCIMB 13768 / 1H11).